A 123-amino-acid polypeptide reads, in one-letter code: Large ribosomal subunit protein bL19 (123 aa).

This sequence belongs to the bacterial ribosomal protein bL19 family.

This protein is located at the 30S-50S ribosomal subunit interface and may play a role in the structure and function of the aminoacyl-tRNA binding site. In Ureaplasma urealyticum serovar 10 (strain ATCC 33699 / Western), this protein is Large ribosomal subunit protein bL19.